We begin with the raw amino-acid sequence, 510 residues long: Serine/threonine-protein kinase RIO3 (510 aa).

Disordered regions lie at residues 100–126 (GSSS…ENED) and 143–191 (DEEN…DMVG). Basic and acidic residues-rich tracts occupy residues 108 to 118 (TPDRYHPKTMQ) and 162 to 179 (TKHD…KTFN). The 276-residue stretch at 235-510 (LLLLKWINQG…RGISPAREYN (276 aa)) folds into the Protein kinase domain. ATP-binding positions include 241-249 (INQGVFDSV) and K275. D388 serves as the catalytic Proton acceptor. The segment covering 474–499 (RSVDLRHDKSRPADMELKKYNEEKKA) has biased composition (basic and acidic residues). Positions 474 to 510 (RSVDLRHDKSRPADMELKKYNEEKKANRGISPAREYN) are disordered.

It belongs to the protein kinase superfamily. RIO-type Ser/Thr kinase family. The cofactor is Mg(2+). As to expression, expressed in tail neurons (PVQ and PHAL/PQR).

It catalyses the reaction L-seryl-[protein] + ATP = O-phospho-L-seryl-[protein] + ADP + H(+). The catalysed reaction is L-threonyl-[protein] + ATP = O-phospho-L-threonyl-[protein] + ADP + H(+). In Caenorhabditis elegans, this protein is Serine/threonine-protein kinase RIO3 (riok-3).